Consider the following 339-residue polypeptide: Longiborneol synthase CLM1 (339 aa).

The segment covering 1-17 (MLATPTLSNFDKPSLPS) has biased composition (polar residues). Residues 1 to 21 (MLATPTLSNFDKPSLPSSEGG) are disordered. Mg(2+) contacts are provided by D112, N241, S245, and E249. The short motif at 241-249 (NDVLSFYKE) is the NDXXSXXXE magnesium-binding motif element.

The protein belongs to the trichodiene synthase family. It depends on Mg(2+) as a cofactor. Mn(2+) serves as cofactor.

The enzyme catalyses (2E,6E)-farnesyl diphosphate + H2O = (-)-longiborneol + diphosphate. It functions in the pathway mycotoxin biosynthesis. Its function is as follows. Terpene cyclase involved in the biosynthesis of culmorin, a tricyclic sesquiterpene diol reported to have antifungal activity and some phytotoxicity to wheat coleoptile tissue, contributing to Fusarium head blight disease. The terpene cyclase CLM1 is responsible for the cyclization of farnesyl diphosphate into the intermediate longiborneol. Longiborneol is then hydroxylated in a regio- and endo-stereoselective manner at position C-11 by the cytochrome P450 monooxygenase CLM2 to produce culmorin. Additional non-specific oxygenases are also able to hydroxylate longiborneol at other sites than C-11 leading to 3-hydroxylongiborneol, 5-hydroxylongiborneol, 12-hydroxylongiborneol and 15-hydroxylongiborneol. Moreover, another oxygenase capable of installing a C-11 exo-hydroxy group in longiborneol can also yield 11-epi-acetylculmorin. The production of these longiborneol derivatives is dwarfed by the high abundance of culmorin, suggesting that CLM2 displays superior enzymatic activity to the unidentified, possibly promiscuous, additional oxygenases. This is Longiborneol synthase CLM1 from Gibberella zeae (strain ATCC MYA-4620 / CBS 123657 / FGSC 9075 / NRRL 31084 / PH-1) (Wheat head blight fungus).